The primary structure comprises 61 residues: Large ribosomal subunit protein uL29 (61 aa).

The protein belongs to the universal ribosomal protein uL29 family.

This Stenotrophomonas maltophilia (strain R551-3) protein is Large ribosomal subunit protein uL29.